A 116-amino-acid chain; its full sequence is Ribosome-binding factor A (116 aa).

This sequence belongs to the RbfA family. As to quaternary structure, monomer. Binds 30S ribosomal subunits, but not 50S ribosomal subunits or 70S ribosomes.

It localises to the cytoplasm. One of several proteins that assist in the late maturation steps of the functional core of the 30S ribosomal subunit. Associates with free 30S ribosomal subunits (but not with 30S subunits that are part of 70S ribosomes or polysomes). Required for efficient processing of 16S rRNA. May interact with the 5'-terminal helix region of 16S rRNA. This Streptococcus agalactiae protein is Ribosome-binding factor A.